A 280-amino-acid polypeptide reads, in one-letter code: Large ribosomal subunit protein uL2 (280 aa).

Disordered stretches follow at residues 1–59 and 223–280; these read MAIR…GGHK and GVVM…NKKR. Composition is skewed to basic residues over residues 45–59 and 269–280; these read VHGHITTRHKGGGHK and VRRRRSNKNKKR.

The protein belongs to the universal ribosomal protein uL2 family. In terms of assembly, part of the 50S ribosomal subunit. Forms a bridge to the 30S subunit in the 70S ribosome.

Functionally, one of the primary rRNA binding proteins. Required for association of the 30S and 50S subunits to form the 70S ribosome, for tRNA binding and peptide bond formation. It has been suggested to have peptidyltransferase activity; this is somewhat controversial. Makes several contacts with the 16S rRNA in the 70S ribosome. The protein is Large ribosomal subunit protein uL2 of Corynebacterium jeikeium (strain K411).